The primary structure comprises 663 residues: DNA ligase 1 (663 aa).

NAD(+) contacts are provided by residues 30-34 (DAEYD) and 78-79 (SL). The N6-AMP-lysine intermediate role is filled by Lys-105. Residues Arg-126, Glu-161, and Lys-294 each coordinate NAD(+). Residues Cys-389, Cys-392, Cys-407, and Cys-412 each contribute to the Zn(2+) site. In terms of domain architecture, BRCT spans 574-663 (AAGAPLAGKT…WAQLIEAKLV (90 aa)).

Belongs to the NAD-dependent DNA ligase family. LigA subfamily. The cofactor is Mg(2+). It depends on Mn(2+) as a cofactor.

It carries out the reaction NAD(+) + (deoxyribonucleotide)n-3'-hydroxyl + 5'-phospho-(deoxyribonucleotide)m = (deoxyribonucleotide)n+m + AMP + beta-nicotinamide D-nucleotide.. DNA ligase that catalyzes the formation of phosphodiester linkages between 5'-phosphoryl and 3'-hydroxyl groups in double-stranded DNA using NAD as a coenzyme and as the energy source for the reaction. It is essential for DNA replication and repair of damaged DNA. The chain is DNA ligase 1 from Nocardia farcinica (strain IFM 10152).